Here is a 332-residue protein sequence, read N- to C-terminus: T-cell leukemia homeobox protein 1 (332 aa).

The homeobox DNA-binding region spans 203–262; the sequence is KKKPRTSFTRLQICELEKRFHRQKYLASAERAALAKALKMTDAQVKTWFQNRRTKWRRQT. Residue Lys-238 is modified to N6-acetyllysine.

In terms of tissue distribution, expressed in various embryonic tissues, including branchial arches, some component of the nervous system and spleen.

Its subcellular location is the nucleus. In terms of biological role, controls the genesis of the spleen. Binds to the DNA sequence 5'-GGCGGTAAGTGG-3'. The sequence is that of T-cell leukemia homeobox protein 1 (Tlx1) from Mus musculus (Mouse).